The sequence spans 611 residues: Virulence metalloprotease (611 aa).

Residues 1-25 (MKKVQRQMKWLFLAASISAALPVSA) form the signal peptide. Positions 26-199 (AKMVQVDDPS…VLQTWEGLNH (174 aa)) are excised as a propeptide. His-346 is a binding site for Zn(2+). Residue Glu-347 is part of the active site. Positions 350 and 370 each coordinate Zn(2+). The Proton donor role is filled by His-429.

This sequence belongs to the peptidase M4 family. Ca(2+) serves as cofactor. Requires Zn(2+) as cofactor. Seems to be more extensively processed.

The protein localises to the secreted. Extracellular zinc metalloprotease involved in the virulence mechanism of V.anguillarum. The sequence is that of Virulence metalloprotease (empA) from Vibrio anguillarum (Listonella anguillarum).